We begin with the raw amino-acid sequence, 84 residues long: Small ribosomal subunit protein bS18 (84 aa).

The protein belongs to the bacterial ribosomal protein bS18 family. As to quaternary structure, part of the 30S ribosomal subunit. Forms a tight heterodimer with protein bS6.

Binds as a heterodimer with protein bS6 to the central domain of the 16S rRNA, where it helps stabilize the platform of the 30S subunit. The polypeptide is Small ribosomal subunit protein bS18 (Helicobacter hepaticus (strain ATCC 51449 / 3B1)).